The sequence spans 387 residues: Polyadenylate-binding protein RBP45A (387 aa).

RRM domains lie at 60-140 (KSLW…WAQA), 154-233 (HTIF…PAAN), and 260-332 (TTIF…WGRS). A compositionally biased stretch (polar residues) spans 329–342 (WGRSPNKQSDQAQW). Residues 329-387 (WGRSPNKQSDQAQWNGGGYYGYPPQPQGGYGYAAQPPTQDPNAYYGGYTGYGNYQQQRQ) form a disordered region.

It belongs to the polyadenylate-binding RBP45 family. Interacts with the poly(A) tail of mRNA in nucleus. Mostly expressed in seedlings, and, to a lower extent, in leaves, stems, and flowers. Present in immature anther tissues (tapetum cells) and mature pollen grains.

The protein resides in the nucleus. Its function is as follows. Heterogeneous nuclear ribonucleoprotein (hnRNP)-protein binding the poly(A) tail of mRNA and probably involved in some steps of pre-mRNA maturation. This is Polyadenylate-binding protein RBP45A (RBP45A) from Arabidopsis thaliana (Mouse-ear cress).